We begin with the raw amino-acid sequence, 229 residues long: Response regulator SaeR (229 aa).

The region spanning His3–Leu116 is the Response regulatory domain. Asp51 bears the 4-aspartylphosphate mark. Positions Ile128–Arg227 form a DNA-binding region, ompR/PhoB-type.

In terms of processing, phosphorylated by SaeS.

It is found in the cytoplasm. In terms of biological role, member of the two-component regulatory system SaeR/SaeS. Probably functions as a transcriptional regulator via a specific DNA-binding domain, recognizing motifs near the promoter sequences of target genes. This chain is Response regulator SaeR (saeR), found in Staphylococcus epidermidis (strain ATCC 35984 / DSM 28319 / BCRC 17069 / CCUG 31568 / BM 3577 / RP62A).